Consider the following 61-residue polypeptide: Insect toxin BsIT1 (61 aa).

The LCN-type CS-alpha/beta domain occupies 1-61 (DGYILMRNGC…KHLNYHKKTC (61 aa)). 4 disulfides stabilise this stretch: C10/C61, C14/C35, C21/C42, and C25/C44.

It belongs to the long (4 C-C) scorpion toxin superfamily. Sodium channel inhibitor family. Beta subfamily. In terms of tissue distribution, expressed by the venom gland.

The protein localises to the secreted. Depressant insect beta-toxins cause a transient contraction paralysis followed by a slow flaccid paralysis. They bind voltage-independently at site-4 of sodium channels (Nav) and shift the voltage of activation toward more negative potentials thereby affecting sodium channel activation and promoting spontaneous and repetitive firing. This toxin is active only on insects and causes a transient contraction paralysis followed by a slow flaccid paralysis. The sequence is that of Insect toxin BsIT1 from Hottentotta tamulus sindicus (Scorpion).